A 342-amino-acid polypeptide reads, in one-letter code: viral G-protein coupled receptor (342 aa).

At Met1–Val51 the chain is on the extracellular side. N-linked (GlcNAc...) asparagine; by host glycosylation is found at Asn18, Asn22, and Asn31. Residues Gly52–Phe72 traverse the membrane as a helical segment. The Cytoplasmic portion of the chain corresponds to Cys73–Asn92. A helical membrane pass occupies residues Ser93 to Ile113. At Ser114–Glu121 the chain is on the extracellular side. The helical transmembrane segment at Ile122–Val142 threads the bilayer. At Arg143–Ser159 the chain is on the cytoplasmic side. Residues Leu160–Cys180 form a helical membrane-spanning segment. The Extracellular portion of the chain corresponds to Arg181 to Thr217. The chain crosses the membrane as a helical span at residues Ala218–Val238. The Cytoplasmic portion of the chain corresponds to Arg239–Gly251. A helical membrane pass occupies residues Val252 to Leu272. Residues Leu273–Asn293 are Extracellular-facing. Residues Val294–Tyr314 form a helical membrane-spanning segment. Topologically, residues Ser315–Thr342 are cytoplasmic.

Belongs to the G-protein coupled receptor 1 family. As to quaternary structure, interacts with protein K7; this interaction promotes vGPCR proteasomal degradation. Interacts with host CADM1; this interaction is essential for chronic NF-kappa-B activation.

The protein localises to the host cell membrane. Receptor that signals constitutively via several signaling pathways including PI3K/AKT as well as mitogen- and stress-activated/MAP kinases. Promotes host cell proliferation and survival, modulates cell migration, stimulates angiogenesis, and recruits inflammatory cells, both in expressing cells and in neighboring cells. Maintains chronic activation of NF-kappa-B via interaction with host CADM1. This is viral G-protein coupled receptor (ORF74) from Human herpesvirus 8 type P (isolate GK18) (HHV-8).